The sequence spans 151 residues: D-aminoacyl-tRNA deacylase (151 aa).

The Gly-cisPro motif, important for rejection of L-amino acids signature appears at 139-140; sequence GP.

The protein belongs to the DTD family. In terms of assembly, homodimer.

It is found in the cytoplasm. The enzyme catalyses glycyl-tRNA(Ala) + H2O = tRNA(Ala) + glycine + H(+). The catalysed reaction is a D-aminoacyl-tRNA + H2O = a tRNA + a D-alpha-amino acid + H(+). In terms of biological role, an aminoacyl-tRNA editing enzyme that deacylates mischarged D-aminoacyl-tRNAs. Also deacylates mischarged glycyl-tRNA(Ala), protecting cells against glycine mischarging by AlaRS. Acts via tRNA-based rather than protein-based catalysis; rejects L-amino acids rather than detecting D-amino acids in the active site. By recycling D-aminoacyl-tRNA to D-amino acids and free tRNA molecules, this enzyme counteracts the toxicity associated with the formation of D-aminoacyl-tRNA entities in vivo and helps enforce protein L-homochirality. This Symbiobacterium thermophilum (strain DSM 24528 / JCM 14929 / IAM 14863 / T) protein is D-aminoacyl-tRNA deacylase.